We begin with the raw amino-acid sequence, 126 residues long: Large ribosomal subunit protein bL12 (126 aa).

It belongs to the bacterial ribosomal protein bL12 family. Homodimer. Part of the ribosomal stalk of the 50S ribosomal subunit. Forms a multimeric L10(L12)X complex, where L10 forms an elongated spine to which 2 to 4 L12 dimers bind in a sequential fashion. Binds GTP-bound translation factors.

Functionally, forms part of the ribosomal stalk which helps the ribosome interact with GTP-bound translation factors. Is thus essential for accurate translation. The polypeptide is Large ribosomal subunit protein bL12 (Legionella pneumophila (strain Paris)).